The primary structure comprises 174 residues: Ribosomal RNA large subunit methyltransferase H (174 aa).

S-adenosyl-L-methionine is bound by residues L90, G122, and 141 to 146 (LGELTW).

It belongs to the RNA methyltransferase RlmH family. Homodimer.

The protein resides in the cytoplasm. It carries out the reaction pseudouridine(1915) in 23S rRNA + S-adenosyl-L-methionine = N(3)-methylpseudouridine(1915) in 23S rRNA + S-adenosyl-L-homocysteine + H(+). Its function is as follows. Specifically methylates the pseudouridine at position 1915 (m3Psi1915) in 23S rRNA. This Brucella melitensis biotype 2 (strain ATCC 23457) protein is Ribosomal RNA large subunit methyltransferase H.